The chain runs to 186 residues: Alkyl hydroperoxide reductase AhpD (186 aa).

Residue cysteine 132 is the Proton donor of the active site. The cysteines at positions 132 and 135 are disulfide-linked. Cysteine 135 serves as the catalytic Cysteine sulfenic acid (-SOH) intermediate.

This sequence belongs to the AhpD family.

The catalysed reaction is N(6)-[(R)-dihydrolipoyl]-L-lysyl-[lipoyl-carrier protein] + a hydroperoxide = N(6)-[(R)-lipoyl]-L-lysyl-[lipoyl-carrier protein] + an alcohol + H2O. In terms of biological role, antioxidant protein with alkyl hydroperoxidase activity. Required for the reduction of the AhpC active site cysteine residues and for the regeneration of the AhpC enzyme activity. The protein is Alkyl hydroperoxide reductase AhpD of Anaeromyxobacter sp. (strain K).